Here is a 449-residue protein sequence, read N- to C-terminus: MIKIRKGLDLPIAGAPAQAIQDGPIIQHVALLGEDYVGMRPSMLVQEGESVKKGQALFEDKKTPGVFFTAPASGRILSINRGERRVLQSVVIAVENGGDEQLEFAHYPVAELAMLPREQVESELLASGLWTALRTRPFSKTPAPGSTPRAIFVTAMDSQPLAADPQVIIAEQLAAFNAGLAVLARLTDGKVHVCHAAGANLGKQPDAQVTYNEFAGPHPAGLVGTHIHFLEPVSLKKTVWHIGYQDAIAIGTLFTTGKLDTRRVVALAGPQVEQPVLLRTRLGASIDELTAGRLKAGENRVISGSVLSGTHVAGPNAYLGRFHSLVSVLQEGRDKELFGWIAPSPDKFSITRTTLGHFLKNKLFAFSTTTHGGERAMVPIGNYERVMPLDILPTLLLRDLLAGDSDSAQALGCLELDEEDLALCTFVCPGKYEYAPVLRDVLTKIEQEG.

Belongs to the NqrA family. As to quaternary structure, composed of six subunits; NqrA, NqrB, NqrC, NqrD, NqrE and NqrF.

It carries out the reaction a ubiquinone + n Na(+)(in) + NADH + H(+) = a ubiquinol + n Na(+)(out) + NAD(+). NQR complex catalyzes the reduction of ubiquinone-1 to ubiquinol by two successive reactions, coupled with the transport of Na(+) ions from the cytoplasm to the periplasm. NqrA to NqrE are probably involved in the second step, the conversion of ubisemiquinone to ubiquinol. In Serratia proteamaculans (strain 568), this protein is Na(+)-translocating NADH-quinone reductase subunit A.